The chain runs to 139 residues: Transcription antitermination protein NusB (139 aa).

This sequence belongs to the NusB family.

Its function is as follows. Involved in transcription antitermination. Required for transcription of ribosomal RNA (rRNA) genes. Binds specifically to the boxA antiterminator sequence of the ribosomal RNA (rrn) operons. The polypeptide is Transcription antitermination protein NusB (Sodalis glossinidius (strain morsitans)).